The primary structure comprises 408 residues: Imidazolonepropionase (408 aa).

Residues His73 and His75 each coordinate Fe(3+). Zn(2+) is bound by residues His73 and His75. 4-imidazolone-5-propanoate-binding residues include Arg82, Tyr145, and His178. Tyr145 is a binding site for N-formimidoyl-L-glutamate. His243 contacts Fe(3+). His243 contacts Zn(2+). 4-imidazolone-5-propanoate is bound at residue Gln246. Residue Asp318 participates in Fe(3+) binding. Position 318 (Asp318) interacts with Zn(2+). The N-formimidoyl-L-glutamate site is built by Asn320 and Gly322. Ser323 contacts 4-imidazolone-5-propanoate.

The protein belongs to the metallo-dependent hydrolases superfamily. HutI family. Zn(2+) is required as a cofactor. Requires Fe(3+) as cofactor.

It is found in the cytoplasm. The enzyme catalyses 4-imidazolone-5-propanoate + H2O = N-formimidoyl-L-glutamate. It functions in the pathway amino-acid degradation; L-histidine degradation into L-glutamate; N-formimidoyl-L-glutamate from L-histidine: step 3/3. Functionally, catalyzes the hydrolytic cleavage of the carbon-nitrogen bond in imidazolone-5-propanoate to yield N-formimidoyl-L-glutamate. It is the third step in the universal histidine degradation pathway. The sequence is that of Imidazolonepropionase from Shewanella piezotolerans (strain WP3 / JCM 13877).